The following is a 290-amino-acid chain: Putative speedy protein-like protein 3 (290 aa).

Positions 16-50 (GVDPSPPCRSLGWKRKKEWSDESEEEPEKELAPEP) are disordered. Residues 36-50 (DESEEEPEKELAPEP) are compositionally biased toward acidic residues.

Belongs to the Speedy/Ringo family.

This is Putative speedy protein-like protein 3 from Homo sapiens (Human).